The chain runs to 467 residues: 3-isopropylmalate dehydratase large subunit (467 aa).

Cysteine 348, cysteine 409, and cysteine 412 together coordinate [4Fe-4S] cluster.

This sequence belongs to the aconitase/IPM isomerase family. LeuC type 1 subfamily. As to quaternary structure, heterodimer of LeuC and LeuD. [4Fe-4S] cluster serves as cofactor.

It catalyses the reaction (2R,3S)-3-isopropylmalate = (2S)-2-isopropylmalate. It participates in amino-acid biosynthesis; L-leucine biosynthesis; L-leucine from 3-methyl-2-oxobutanoate: step 2/4. In terms of biological role, catalyzes the isomerization between 2-isopropylmalate and 3-isopropylmalate, via the formation of 2-isopropylmaleate. This Thiobacillus denitrificans (strain ATCC 25259 / T1) protein is 3-isopropylmalate dehydratase large subunit.